The following is a 67-amino-acid chain: MAVPKRKMSRSNTRARRAKWKATAPHLAKTVENGRVTYSLPHQAKVVTDSAGTALFLEYKGRKVADV.

Residues 1 to 20 (MAVPKRKMSRSNTRARRAKW) show a composition bias toward basic residues. Residues 1–24 (MAVPKRKMSRSNTRARRAKWKATA) are disordered.

Belongs to the bacterial ribosomal protein bL32 family.

This Renibacterium salmoninarum (strain ATCC 33209 / DSM 20767 / JCM 11484 / NBRC 15589 / NCIMB 2235) protein is Large ribosomal subunit protein bL32.